Here is a 26-residue protein sequence, read N- to C-terminus: L-amino-acid oxidase (26 aa).

The protein belongs to the flavin monoamine oxidase family. As to quaternary structure, monomer. FAD is required as a cofactor. In terms of processing, not glycosylated. Expressed by the ink gland.

The protein resides in the secreted. The enzyme catalyses an L-alpha-amino acid + O2 + H2O = a 2-oxocarboxylate + H2O2 + NH4(+). Catalyzes the oxidative deamination of positively charged L-amino acids L-Lys and L-Arg but not of amino acids L-His, L-Asp or L-Glu. Has antibacterial activity against the Gram-positive bacterium S.aureus (MIC=15 ug/ml). This antibacterial activity is bacteriostatic in the absence of amino acids L-Lys or L-Arg but bactericidal in their presence. The antibacterial effect is largely dependent on H(2)O(2) produced in the oxidative deamination of substrates. Has hemagglutinating activity towards rabbit erythrocytes. Hemagglutinating activity is inhibited by the glycoprotein fetuin, but not by glucose, mannose, galactose, N-acetylglucosamine, N-acetylgalactosamine or sialic acid. This is L-amino-acid oxidase from Aplysia dactylomela (Spotted sea hare).